The primary structure comprises 770 residues: DNA topoisomerase 1 (770 aa).

The Toprim domain occupies 4 to 140 (FRIIIAEKAD…EIRRAKFSAL (137 aa)). Positions 10 and 109 each coordinate Mg(2+). The 408-residue stretch at 156-563 (NYSLADAADA…ESKKMLHEVL (408 aa)) folds into the Topo IA-type catalytic domain. Residues 194 to 199 (SAGRVQ) form an interaction with DNA region. The active-site O-(5'-phospho-DNA)-tyrosine intermediate is the Y312. 3 C4-type zinc fingers span residues 611–638 (CEDP…CPVC), 673–700 (CPAD…YPKC), and 719–744 (CPYC…NMQC).

Belongs to the type IA topoisomerase family. Monomer. It depends on Mg(2+) as a cofactor.

It catalyses the reaction ATP-independent breakage of single-stranded DNA, followed by passage and rejoining.. In terms of biological role, releases the supercoiling and torsional tension of DNA, which is introduced during the DNA replication and transcription, by transiently cleaving and rejoining one strand of the DNA duplex. Introduces a single-strand break via transesterification at a target site in duplex DNA. The scissile phosphodiester is attacked by the catalytic tyrosine of the enzyme, resulting in the formation of a DNA-(5'-phosphotyrosyl)-enzyme intermediate and the expulsion of a 3'-OH DNA strand. The free DNA strand then undergoes passage around the unbroken strand, thus removing DNA supercoils. Finally, in the religation step, the DNA 3'-OH attacks the covalent intermediate to expel the active-site tyrosine and restore the DNA phosphodiester backbone. The polypeptide is DNA topoisomerase 1 (Thermoplasma acidophilum (strain ATCC 25905 / DSM 1728 / JCM 9062 / NBRC 15155 / AMRC-C165)).